Reading from the N-terminus, the 392-residue chain is Neutrophil cytosol factor 1 (392 aa).

Residues 4 to 125 (HFIRHIALLG…NFFKVRPDDL (122 aa)) enclose the PX domain. 2 SH3 domains span residues 156 to 215 (IILQ…PLDS) and 226 to 285 (YAGE…KAGQ). The segment at 290-392 (AKSQIKSRGA…STKRKLASAV (103 aa)) is disordered. A phosphoserine mark is found at Ser304 and Ser305. The span at 310 to 319 (HSIHQRSRKR) shows a compositional bias: basic residues. Phosphoserine occurs at positions 321, 329, and 348. Residues 376-385 (ILHRCSESTK) are compositionally biased toward basic and acidic residues.

As to quaternary structure, component of the phagocyte NADPH oxidase complex composed of an obligatory core heterodimer formed by the membrane proteins CYBA and CYBB and the cytosolic regulatory subunits NCF1/p47-phox, NCF2/p67-phox, NCF4/p40-phox and the small GTPase RAC1 or RAC2. Part of a cytosolic complex composed at least by NCF1, NCF2 and NCF4. Interacts (via C-terminus) with NCF2 (via the C-terminal SH3 domain). Interacts with NCF4. Interacts with CYBB. Interacts (via the second SH3 domain) with CYBA; interaction is phosphorylation-dependent. Interacts with NOXA1. Interacts with ADAM15. Interacts with TRAF4. Interacts with FASLG. Interacts with PARK7 (via C-terminus); the interaction is enhanced by LPS and modulates NCF1 phosphorylation and membrane translocation. Post-translationally, phosphorylated by PRKCD; phosphorylation induces activation of NCF1, leading to assembly and activation of the NADPH oxidase complex.

It is found in the cytoplasm. The protein resides in the cytosol. It localises to the membrane. Its function is as follows. Subunit of the phagocyte NADPH oxidase complex that mediates the transfer of electrons from cytosolic NADPH to O2 to produce the superoxide anion (O2(-)). In the activated complex, electrons are first transferred from NADPH to flavin adenine dinucleotide (FAD) and subsequently transferred via two heme molecules to molecular oxygen, producing superoxide through an outer-sphere reaction. Activation of the NADPH oxidase complex is initiated by the assembly of cytosolic subunits of the NADPH oxidase complex with the core NADPH oxidase complex to form a complex at the plasma membrane or phagosomal membrane. This activation process is initiated by phosphorylation dependent binding of the cytosolic NCF1/p47-phox subunit to the C-terminus of CYBA/p22-phox. The polypeptide is Neutrophil cytosol factor 1 (Bos taurus (Bovine)).